A 308-amino-acid chain; its full sequence is HTH-type transcriptional activator AllS (308 aa).

Residues 2–59 (FDPETLRTFIAVAETGSFSKAAERLCKTTATISYRIKLLEENTGVALFFRTTRSVTLT) form the HTH lysR-type domain. Positions 19-38 (FSKAAERLCKTTATISYRIK) form a DNA-binding region, H-T-H motif.

Belongs to the LysR transcriptional regulatory family.

Its function is as follows. Positive regulator essential for the expression of allD operon. Binds to the allD promoter. This is HTH-type transcriptional activator AllS (allS) from Escherichia coli O6:K15:H31 (strain 536 / UPEC).